The chain runs to 253 residues: Phosphate import ATP-binding protein PstB (253 aa).

The region spanning 7 to 248 (MHSKGLDFFY…PGNKQTEDYI (242 aa)) is the ABC transporter domain. 39 to 46 (GPSGCGKS) is a binding site for ATP.

Belongs to the ABC transporter superfamily. Phosphate importer (TC 3.A.1.7) family. The complex is composed of two ATP-binding proteins (PstB), two transmembrane proteins (PstC and PstA) and a solute-binding protein (PstS).

The protein localises to the cell inner membrane. It catalyses the reaction phosphate(out) + ATP + H2O = ADP + 2 phosphate(in) + H(+). Part of the ABC transporter complex PstSACB involved in phosphate import. Responsible for energy coupling to the transport system. The chain is Phosphate import ATP-binding protein PstB from Oleidesulfovibrio alaskensis (strain ATCC BAA-1058 / DSM 17464 / G20) (Desulfovibrio alaskensis).